Consider the following 1884-residue polypeptide: Fatty acid synthase subunit alpha (1884 aa).

Residues 91-141 (TPDPAEPPAAEEPKAETGKESAPAASAAAAAATQPAAAVAPPPQSAGPVES) form a disordered region. The span at 111 to 129 (SAPAASAAAAAATQPAAAV) shows a compositional bias: low complexity. The Carrier domain maps to 147 to 222 (VKASLLIHVL…EQFQDTFSGS (76 aa)). O-(pantetheine 4'-phosphoryl)serine is present on S182. Residues 583-613 (TEQTTQDALAIPTGSNTPTEEDELSTASDDD) form a disordered region. A compositionally biased stretch (polar residues) spans 584–600 (EQTTQDALAIPTGSNTP). Residues 601–613 (TEEDELSTASDDD) show a composition bias toward acidic residues. The tract at residues 677-873 (DKYVLVTGAG…CGAIIGWTRG (197 aa)) is beta-ketoacyl reductase. Residues 1120–1660 (IQEVVIQHDL…QKGAQAVVVH (541 aa)) form the Ketosynthase family 3 (KS3) domain. Catalysis depends on for beta-ketoacyl synthase activity residues C1303, H1545, and H1586. Positions 1770, 1771, and 1772 each coordinate Mg(2+). Acetyl-CoA is bound by residues 1770–1772 (DVE), Y1796, S1806, 1815–1825 (EATFKALGVSS), 1839–1842 (RDGN), and 1869–1871 (ISH). 2 residues coordinate Mg(2+): S1870 and H1871.

This sequence belongs to the thiolase-like superfamily. Fungal fatty acid synthetase subunit alpha family. In terms of assembly, fatty acid synthase is composed of alpha and beta subunits.

It carries out the reaction acetyl-CoA + n malonyl-CoA + 2n NADPH + 4n H(+) = a long-chain-acyl-CoA + n CoA + n CO2 + 2n NADP(+).. The catalysed reaction is a fatty acyl-[ACP] + malonyl-[ACP] + H(+) = a 3-oxoacyl-[ACP] + holo-[ACP] + CO2. The enzyme catalyses a (3R)-hydroxyacyl-[ACP] + NADP(+) = a 3-oxoacyl-[ACP] + NADPH + H(+). Its function is as follows. Fatty acid synthetase catalyzes the formation of long-chain fatty acids from acetyl-CoA, malonyl-CoA and NADPH. The alpha subunit contains domains for: acyl carrier protein, 3-oxoacyl-[acyl-carrier-protein] reductase, and 3-oxoacyl-[acyl-carrier-protein] synthase. This chain is Fatty acid synthase subunit alpha (FAS2), found in Candida parapsilosis (strain CDC 317 / ATCC MYA-4646) (Yeast).